Consider the following 252-residue polypeptide: 5'-nucleotidase SurE (252 aa).

Asp-8, Asp-9, Ser-39, and Asn-91 together coordinate a divalent metal cation.

This sequence belongs to the SurE nucleotidase family. It depends on a divalent metal cation as a cofactor.

The protein resides in the cytoplasm. It carries out the reaction a ribonucleoside 5'-phosphate + H2O = a ribonucleoside + phosphate. Its function is as follows. Nucleotidase that shows phosphatase activity on nucleoside 5'-monophosphates. The chain is 5'-nucleotidase SurE from Variovorax paradoxus (strain S110).